We begin with the raw amino-acid sequence, 419 residues long: Dual specificity mitogen-activated protein kinase kinase 7 (419 aa).

Position 2 is an N-acetylalanine (Ala2). Residues 2–30 (AASSLEQKLSRLEAKLKQENREARRRIDL) are a coiled coil. The span at 18-30 (KQENREARRRIDL) shows a compositional bias: basic and acidic residues. Residues 18 to 76 (KQENREARRRIDLNLDISPQRPRPTLQLPLANDGGSRSPSSESSPQHPTPPARPRHMLG) form a disordered region. Over residues 36-63 (PQRPRPTLQLPLANDGGSRSPSSESSPQ) the composition is skewed to low complexity. The interval 37–57 (QRPRPTLQLPLANDGGSRSPS) is d domain. A Protein kinase domain is found at 120-380 (LENLGEMGSG…YNKLLEHSFI (261 aa)). ATP-binding positions include 126–134 (MGSGTCGQV) and Lys149. Asp243 serves as the catalytic Proton acceptor. A Phosphoserine; by MAP3K modification is found at Ser271. Thr275 carries the phosphothreonine; by MAP3K modification. The interval 377 to 400 (HSFIKRYETLEVDVASWFKDVMAK) is DVD domain. Ser411 is modified (phosphoserine).

Belongs to the protein kinase superfamily. STE Ser/Thr protein kinase family. MAP kinase kinase subfamily. Interacts with isoform 1 of VRK2. Interacts (via its D domain) with its substrates MAPK8/JNK1, MAPK9/JNK2 and MAPK10/JNK3. Interacts (via its DVD domain) with MAP3Ks activators like MAP3K5/ASK1 and MAP3K1/MEKK1. Interacts with MAPK8IP1/JIP1, MAPK8IP2/JIP2 and MAPK8IP3/JIP3 scaffold proteins. Interacts with RASSF7, the interaction promotes phosphorylation. Found in a complex with SH3RF1, RAC1, MAP3K11/MLK3, MAPK8IP1/JIP1 and MAPK8/JNK1. Found in a complex with SH3RF1, RAC2, MAP3K7/TAK1, MAPK8IP1/JIP1, MAPK8/JNK1 and MAPK9/JNK2. Requires Mg(2+) as cofactor. In terms of processing, activated by phosphorylation on Ser-271 and Thr-275 by MAP kinase kinase kinases (MAP3Ks). As to expression, ubiquitous; with highest level of expression in skeletal muscle. Isoform 3 is found at low levels in placenta, fetal liver, and skeletal muscle.

Its subcellular location is the nucleus. It is found in the cytoplasm. It carries out the reaction L-seryl-[protein] + ATP = O-phospho-L-seryl-[protein] + ADP + H(+). It catalyses the reaction L-threonyl-[protein] + ATP = O-phospho-L-threonyl-[protein] + ADP + H(+). The catalysed reaction is L-tyrosyl-[protein] + ATP = O-phospho-L-tyrosyl-[protein] + ADP + H(+). Activated by phosphorylation by specific MAP kinase kinase kinases such as MAP3K1/MEKK1, MAP3K3/MEKK3, MAP3K11/MLK3 and MAP3K12/DLK. Its function is as follows. Dual specificity protein kinase which acts as an essential component of the MAP kinase signal transduction pathway. Essential component of the stress-activated protein kinase/c-Jun N-terminal kinase (SAP/JNK) signaling pathway. With MAP2K4/MKK4, is the one of the only known kinase to directly activate the stress-activated protein kinase/c-Jun N-terminal kinases MAPK8/JNK1, MAPK9/JNK2 and MAPK10/JNK3. MAP2K4/MKK4 and MAP2K7/MKK7 both activate the JNKs by phosphorylation, but they differ in their preference for the phosphorylation site in the Thr-Pro-Tyr motif. MAP2K4/MKK4 shows preference for phosphorylation of the Tyr residue and MAP2K7/MKK7 for the Thr residue. The monophosphorylation of JNKs on the Thr residue is sufficient to increase JNK activity indicating that MAP2K7/MKK7 is important to trigger JNK activity, while the additional phosphorylation of the Tyr residue by MAP2K4/MKK4 ensures optimal JNK activation. Has a specific role in JNK signal transduction pathway activated by pro-inflammatory cytokines. The MKK/JNK signaling pathway is also involved in mitochondrial death signaling pathway, including the release cytochrome c, leading to apoptosis. Part of a non-canonical MAPK signaling pathway, composed of the upstream MAP3K12 kinase and downstream MAP kinases MAPK1/ERK2 and MAPK3/ERK1, that enhances the AP-1-mediated transcription of APP in response to APOE. The chain is Dual specificity mitogen-activated protein kinase kinase 7 (MAP2K7) from Homo sapiens (Human).